Reading from the N-terminus, the 241-residue chain is Corrinoid adenosyltransferase MMAB (241 aa).

Residues 1-26 constitute a mitochondrion transit peptide; that stretch reads MAVWGPGGRLGLRGCLGARKLLCPRF. Residues 27 to 69 are disordered; it reads QSRGPQGVEDGDRPQPSSKTPKVPKIYTKTGDKGFSSTFTGER. Residues 54 to 63 and Lys-72 contribute to the ATP site; that span reads TKTGDKGFSS. The residue at position 128 (Ser-128) is a Phosphoserine. An ATP-binding site is contributed by 184 to 188; it reads RRAER. N6-succinyllysine is present on Lys-205. Asn-208 contacts ATP. Residue Lys-224 is modified to N6-acetyllysine; alternate. At Lys-224 the chain carries N6-succinyllysine; alternate.

Belongs to the Cob(I)alamin adenosyltransferase family. As to quaternary structure, homotrimer.

It is found in the mitochondrion. It carries out the reaction cob(I)alamin-[corrinoid adenosyltransferase] + ATP = apo-[corrinoid adenosyltransferase] + adenosylcob(III)alamin + triphosphate. Its function is as follows. Converts cob(I)alamin to adenosylcobalamin (adenosylcob(III)alamin), a coenzyme for methylmalonyl-CoA mutase, therefore participates in the final step of the vitamin B12 conversion. Generates adenosylcobalamin (AdoCbl) and directly delivers the cofactor to MUT in a transfer that is stimulated by ATP-binding to MMAB and gated by MMAA. This Bos taurus (Bovine) protein is Corrinoid adenosyltransferase MMAB.